A 380-amino-acid chain; its full sequence is MLYHFLYPLSGQFGLFNVLRYPSFRIVAAGLVSLLIGLLLGPLFIERMRVLQYGHSNVREDTPERHKKKAGTPSMGGALILLAVTVSTLLFADLGNRLVWAALLVTLGYGVIGFWDDWLKISKRNSKGLAGKKKLVLQVLVVLAVYYGLLTDWQPRTTDGFPFLTIGSLVDLHLTLPFVPTHLFSPSLGWLYLPFMIFVVVATSNAVNLTDGLDGLAIGPTIVSSMTFLALSYVAGATIAGFSLAEYLRIAYIPGAEELGVFCSAIFGAGIAFLWYNTYPASVFMGDVGSLALGGGLGMLAVLTKNEVASAILHGVFLAETVSVILQVWSFRTTGKRIFRMAPIHHHYELKGWAEPKIIVRFWIMSIMLALVALMSLKLR.

Transmembrane regions (helical) follow at residues 26–46 (IVAA…LFIE), 75–95 (MGGA…ADLG), 98–118 (LVWA…WDDW), 135–155 (LVLQ…DWQP), 160–180 (GFPF…PFVP), 183–203 (LFSP…VVAT), 222–242 (IVSS…IAGF), 259–279 (LGVF…YNTY), 283–303 (VFMG…LAVL), 311–331 (AILH…VWSF), and 357–377 (KIIV…LMSL).

Belongs to the glycosyltransferase 4 family. MraY subfamily. Mg(2+) serves as cofactor.

The protein resides in the cell inner membrane. It carries out the reaction UDP-N-acetyl-alpha-D-muramoyl-L-alanyl-gamma-D-glutamyl-meso-2,6-diaminopimeloyl-D-alanyl-D-alanine + di-trans,octa-cis-undecaprenyl phosphate = di-trans,octa-cis-undecaprenyl diphospho-N-acetyl-alpha-D-muramoyl-L-alanyl-D-glutamyl-meso-2,6-diaminopimeloyl-D-alanyl-D-alanine + UMP. Its pathway is cell wall biogenesis; peptidoglycan biosynthesis. In terms of biological role, catalyzes the initial step of the lipid cycle reactions in the biosynthesis of the cell wall peptidoglycan: transfers peptidoglycan precursor phospho-MurNAc-pentapeptide from UDP-MurNAc-pentapeptide onto the lipid carrier undecaprenyl phosphate, yielding undecaprenyl-pyrophosphoryl-MurNAc-pentapeptide, known as lipid I. The sequence is that of Phospho-N-acetylmuramoyl-pentapeptide-transferase from Anaeromyxobacter sp. (strain Fw109-5).